The following is a 99-amino-acid chain: Large ribosomal subunit protein uL23cz/uL23cy (99 aa).

The interval 1–37 is disordered; the sequence is MGGVENPVSTDKAIRLPERKQYSSNAEPNPSKTEVKR. Residues 12–21 are compositionally biased toward basic and acidic residues; it reads KAIRLPERKQ. The segment covering 22-32 has biased composition (polar residues); sequence YSSNAEPNPSK.

This sequence belongs to the universal ribosomal protein uL23 family. Part of the 50S ribosomal subunit.

Its subcellular location is the plastid. It localises to the chloroplast. Binds to 23S rRNA. This is Large ribosomal subunit protein uL23cz/uL23cy (rpl23-A) from Selaginella uncinata (Blue spike-moss).